The primary structure comprises 624 residues: Dihydroxy-acid dehydratase (624 aa).

Mg(2+) is bound at residue D81. C122 contacts [2Fe-2S] cluster. Mg(2+) contacts are provided by D123 and K124. K124 carries the post-translational modification N6-carboxylysine. C195 lines the [2Fe-2S] cluster pocket. E499 lines the Mg(2+) pocket. S525 acts as the Proton acceptor in catalysis.

This sequence belongs to the IlvD/Edd family. In terms of assembly, homodimer. [2Fe-2S] cluster serves as cofactor. The cofactor is Mg(2+).

The enzyme catalyses (2R)-2,3-dihydroxy-3-methylbutanoate = 3-methyl-2-oxobutanoate + H2O. It catalyses the reaction (2R,3R)-2,3-dihydroxy-3-methylpentanoate = (S)-3-methyl-2-oxopentanoate + H2O. The protein operates within amino-acid biosynthesis; L-isoleucine biosynthesis; L-isoleucine from 2-oxobutanoate: step 3/4. Its pathway is amino-acid biosynthesis; L-valine biosynthesis; L-valine from pyruvate: step 3/4. Functionally, functions in the biosynthesis of branched-chain amino acids. Catalyzes the dehydration of (2R,3R)-2,3-dihydroxy-3-methylpentanoate (2,3-dihydroxy-3-methylvalerate) into 2-oxo-3-methylpentanoate (2-oxo-3-methylvalerate) and of (2R)-2,3-dihydroxy-3-methylbutanoate (2,3-dihydroxyisovalerate) into 2-oxo-3-methylbutanoate (2-oxoisovalerate), the penultimate precursor to L-isoleucine and L-valine, respectively. The polypeptide is Dihydroxy-acid dehydratase (Shewanella baltica (strain OS155 / ATCC BAA-1091)).